A 319-amino-acid polypeptide reads, in one-letter code: BTB/POZ domain-containing adapter for CUL3-mediated RhoA degradation protein 2 (319 aa).

Residues 31–99 (KYIRLNVGGC…LRDDTITLPK (69 aa)) form the BTB domain.

It belongs to the BACURD family. Component of the BCR(TNFAIP1) E3 ubiquitin ligase complex, at least composed of cul3, tnfaip1/bacurd2 and rbx1.

Its subcellular location is the cytoplasm. The protein localises to the nucleus. The protein resides in the endosome. It participates in protein modification; protein ubiquitination. Its function is as follows. Substrate-specific adapter of a BCR (BTB-CUL3-RBX1) E3 ubiquitin-protein ligase complex involved in regulation of cytoskeleton structure. The BCR(TNFAIP1) E3 ubiquitin ligase complex mediates the ubiquitination of target proteins, leading to their degradation by the proteasome. This is BTB/POZ domain-containing adapter for CUL3-mediated RhoA degradation protein 2 (tnfaip1) from Xenopus tropicalis (Western clawed frog).